Reading from the N-terminus, the 98-residue chain is Gibberellin-regulated protein 1 (98 aa).

The signal sequence occupies residues Met-1–Ala-23.

It belongs to the GASA family. Six disulfide bonds may be present. Expressed in flower buds, style, stamen filaments, vasculature of sepals, flower abscission zone and green siliques. Lower levels seen in the root phloem, cotyledons and vasculature of rosette leaves.

It localises to the secreted. Gibberellin-regulated protein that may function in hormonal controlled steps of development such as seed germination, flowering and seed maturation. The chain is Gibberellin-regulated protein 1 (GASA1) from Arabidopsis thaliana (Mouse-ear cress).